Here is a 391-residue protein sequence, read N- to C-terminus: GTPase HflX (391 aa).

The disordered stretch occupies residues L162–E181. Residues K222–K391 form the Hflx-type G domain. GTP is bound by residues G228–S235, F253–D257, D278–G281, N344–D347, and S369–T371. The Mg(2+) site is built by S235 and T255.

It belongs to the TRAFAC class OBG-HflX-like GTPase superfamily. HflX GTPase family. In terms of assembly, monomer. Associates with the 50S ribosomal subunit. Requires Mg(2+) as cofactor.

The protein resides in the cytoplasm. Its function is as follows. GTPase that associates with the 50S ribosomal subunit and may have a role during protein synthesis or ribosome biogenesis. This is GTPase HflX from Treponema denticola (strain ATCC 35405 / DSM 14222 / CIP 103919 / JCM 8153 / KCTC 15104).